Consider the following 357-residue polypeptide: Sorbitol dehydrogenase (357 aa).

An N-acetylalanine modification is found at Ala2. Residue Cys45 coordinates Zn(2+). Residue Tyr51 coordinates substrate. Residues His70 and Glu71 each contribute to the Zn(2+) site. Residue Glu156 participates in substrate binding. Ile184, Asp204, and Arg209 together coordinate NAD(+). Phosphoserine is present on residues Ser211 and Ser225. NAD(+) contacts are provided by residues 273-275 and 297-299; these read VGL and VFR. Residues Arg299 and Tyr300 each contribute to the substrate site.

Belongs to the zinc-containing alcohol dehydrogenase family. Homotetramer. Requires Zn(2+) as cofactor.

The protein resides in the mitochondrion membrane. Its subcellular location is the cell projection. It is found in the cilium. It localises to the flagellum. It carries out the reaction xylitol + NAD(+) = D-xylulose + NADH + H(+). It catalyses the reaction L-iditol + NAD(+) = keto-L-sorbose + NADH + H(+). The catalysed reaction is keto-D-fructose + NADH + H(+) = D-sorbitol + NAD(+). In terms of biological role, polyol dehydrogenase that catalyzes the reversible NAD(+)-dependent oxidation of various sugar alcohols. Is active with xylitol, L-iditol and D-sorbitol (D-glucitol) as substrates, leading to the C2-oxidized products D-xylulose, L-sorbose and D-fructose, respectively. Is a key enzyme in the polyol pathway that interconverts glucose and fructose via sorbitol, which constitutes an important alternate route for glucose metabolism. May play a role in sperm motility by using sorbitol as an alternative energy source for sperm motility. The protein is Sorbitol dehydrogenase (SORD) of Macaca fascicularis (Crab-eating macaque).